Here is a 29-residue protein sequence, read N- to C-terminus: Trypsin inhibitor 1 (29 aa).

3 cysteine pairs are disulfide-bonded: cysteine 3–cysteine 20, cysteine 10–cysteine 22, and cysteine 16–cysteine 28.

Belongs to the protease inhibitor I7 (squash-type serine protease inhibitor) family.

It localises to the secreted. Its function is as follows. Inhibits trypsin. This is Trypsin inhibitor 1 from Cucurbita maxima (Pumpkin).